Here is a 634-residue protein sequence, read N- to C-terminus: DNA-directed RNA polymerase subunit gamma (634 aa).

Zn(2+)-binding residues include Cys74, Cys76, Cys89, and Cys92. Residues Asp471, Asp473, and Asp475 each coordinate Mg(2+).

Belongs to the RNA polymerase beta' chain family. RpoC1 subfamily. In terms of assembly, in cyanobacteria the RNAP catalytic core is composed of 2 alpha, 1 beta, 1 beta', 1 gamma and 1 omega subunit. When a sigma factor is associated with the core the holoenzyme is formed, which can initiate transcription. Mg(2+) serves as cofactor. Zn(2+) is required as a cofactor.

The enzyme catalyses RNA(n) + a ribonucleoside 5'-triphosphate = RNA(n+1) + diphosphate. In terms of biological role, DNA-dependent RNA polymerase catalyzes the transcription of DNA into RNA using the four ribonucleoside triphosphates as substrates. In Prochlorococcus marinus (strain MIT 9312), this protein is DNA-directed RNA polymerase subunit gamma.